The chain runs to 212 residues: Large ribosomal subunit protein uL3 (212 aa).

A disordered region spans residues 119–146 (YQGNIKRWGQSRGPETHGSRYHRIPGSM).

It belongs to the universal ribosomal protein uL3 family. Part of the 50S ribosomal subunit. Forms a cluster with proteins L14 and L19.

One of the primary rRNA binding proteins, it binds directly near the 3'-end of the 23S rRNA, where it nucleates assembly of the 50S subunit. This chain is Large ribosomal subunit protein uL3, found in Lactobacillus helveticus (strain DPC 4571).